Consider the following 301-residue polypeptide: 4-hydroxy-tetrahydrodipicolinate synthase (301 aa).

Thr55 lines the pyruvate pocket. The Proton donor/acceptor role is filled by Tyr143. Residue Lys171 is the Schiff-base intermediate with substrate of the active site. Residue Ile213 participates in pyruvate binding.

This sequence belongs to the DapA family. In terms of assembly, homotetramer; dimer of dimers.

It localises to the cytoplasm. The enzyme catalyses L-aspartate 4-semialdehyde + pyruvate = (2S,4S)-4-hydroxy-2,3,4,5-tetrahydrodipicolinate + H2O + H(+). Its pathway is amino-acid biosynthesis; L-lysine biosynthesis via DAP pathway; (S)-tetrahydrodipicolinate from L-aspartate: step 3/4. In terms of biological role, catalyzes the condensation of (S)-aspartate-beta-semialdehyde [(S)-ASA] and pyruvate to 4-hydroxy-tetrahydrodipicolinate (HTPA). The polypeptide is 4-hydroxy-tetrahydrodipicolinate synthase (Psychrobacter arcticus (strain DSM 17307 / VKM B-2377 / 273-4)).